The sequence spans 299 residues: Taste receptor type 2 member 42 (299 aa).

The Extracellular portion of the chain corresponds to 1–7 (MATELDK). A helical membrane pass occupies residues 8 to 28 (IFLILAIAEFIISMLGNVFIG). Residues 29-50 (LVNCSEGIKNQKVFSSDFILTS) are Cytoplasmic-facing. A helical transmembrane segment spans residues 51–71 (LAISTIGQLLVILFDSFLVGL). At 72–101 (ASHLYTTYRLGKPVIMLWHMTNHLTTWLAT) the chain is on the extracellular side. The helical transmembrane segment at 102 to 122 (CLSVFYFFKIAHFPHSLFLWL) threads the bilayer. Topologically, residues 123–127 (RWRMN) are cytoplasmic. A helical membrane pass occupies residues 128–148 (GMIAMLLILSLFLLIFDSSVL). Residues 149–187 (EIFIDISLNIIDKSSLTLYLDESKTLYDKLSILKTLLSL) are Extracellular-facing. A helical transmembrane segment spans residues 188–208 (TSFIPFSLSLTSVLFLYLSLV). Over 209 to 238 (RHTRNLKLSSLGSRDSSTEAHRRAMKMVMS) the chain is Cytoplasmic. Residues 239–259 (FLFLFIVHFFSLQVANWIFFM) traverse the membrane as a helical segment. The Extracellular segment spans residues 260–265 (LWNNKY). The helical transmembrane segment at 266 to 286 (IKFVMLALNAFPSCHSFILIL) threads the bilayer. The Cytoplasmic segment spans residues 287–299 (GNSKLRQTAVRLL).

The protein belongs to the G-protein coupled receptor T2R family.

The protein resides in the membrane. Its function is as follows. Receptor that may play a role in the perception of bitterness and is gustducin-linked. May play a role in sensing the chemical composition of the gastrointestinal content. The activity of this receptor may stimulate alpha gustducin, mediate PLC-beta-2 activation and lead to the gating of TRPM5. In Gorilla gorilla gorilla (Western lowland gorilla), this protein is Taste receptor type 2 member 42 (TAS2R42).